The sequence spans 177 residues: Inorganic pyrophosphatase (177 aa).

Substrate is bound by residues K30, R44, and Y56. Residues D66, D71, and D103 each contribute to the Mg(2+) site. A substrate-binding site is contributed by Y142.

The protein belongs to the PPase family. In terms of assembly, homohexamer. Requires Mg(2+) as cofactor.

The protein localises to the cytoplasm. The enzyme catalyses diphosphate + H2O = 2 phosphate + H(+). Functionally, catalyzes the hydrolysis of inorganic pyrophosphate (PPi) forming two phosphate ions. The protein is Inorganic pyrophosphatase of Caulobacter vibrioides (strain ATCC 19089 / CIP 103742 / CB 15) (Caulobacter crescentus).